Here is a 356-residue protein sequence, read N- to C-terminus: tRNA N6-adenosine threonylcarbamoyltransferase (356 aa).

A divalent metal cation-binding residues include H122, H126, and Y143. Residues 143 to 147, D175, G190, E194, and N287 each bind substrate; that span reads YVSGG. An a divalent metal cation-binding site is contributed by D315.

The protein belongs to the KAE1 / TsaD family. As to quaternary structure, component of the EKC/KEOPS complex composed of at least BUD32, CGI121, GON7, KAE1 and PCC1; the whole complex dimerizes. A divalent metal cation serves as cofactor.

The protein localises to the cytoplasm. It is found in the nucleus. It catalyses the reaction L-threonylcarbamoyladenylate + adenosine(37) in tRNA = N(6)-L-threonylcarbamoyladenosine(37) in tRNA + AMP + H(+). In terms of biological role, component of the EKC/KEOPS complex that is required for the formation of a threonylcarbamoyl group on adenosine at position 37 (t(6)A37) in tRNAs that read codons beginning with adenine. The complex is probably involved in the transfer of the threonylcarbamoyl moiety of threonylcarbamoyl-AMP (TC-AMP) to the N6 group of A37. KAE1 likely plays a direct catalytic role in this reaction, but requires other protein(s) of the complex to fulfill this activity. The EKC/KEOPS complex also promotes both telomere uncapping and telomere elongation. The complex is required for efficient recruitment of transcriptional coactivators. The sequence is that of tRNA N6-adenosine threonylcarbamoyltransferase from Chaetomium globosum (strain ATCC 6205 / CBS 148.51 / DSM 1962 / NBRC 6347 / NRRL 1970) (Soil fungus).